A 411-amino-acid chain; its full sequence is Putative glycosyltransferase SCO3672 (411 aa).

Transmembrane regions (helical) follow at residues 7 to 27 (IAAA…LAAL), 45 to 65 (PVPL…AWAG), 70 to 90 (VVPL…VGAL), 120 to 140 (ETGP…TGAF), 148 to 168 (GVVG…AAVE), 169 to 189 (LMDG…GFLL), 197 to 217 (IALG…AAVL), 227 to 247 (GAGV…LVLL), 277 to 297 (GVVV…VLAH), and 301 to 321 (VGGQ…LGLL).

The protein belongs to the glycosyltransferase 4 family.

Its subcellular location is the cell membrane. The protein is Putative glycosyltransferase SCO3672 of Streptomyces coelicolor (strain ATCC BAA-471 / A3(2) / M145).